The primary structure comprises 504 residues: ATP synthase subunit alpha (504 aa).

169-176 (GDRQTGKT) is a binding site for ATP.

This sequence belongs to the ATPase alpha/beta chains family. As to quaternary structure, F-type ATPases have 2 components, CF(1) - the catalytic core - and CF(0) - the membrane proton channel. CF(1) has five subunits: alpha(3), beta(3), gamma(1), delta(1), epsilon(1). CF(0) has three main subunits: a(1), b(2) and c(9-12). The alpha and beta chains form an alternating ring which encloses part of the gamma chain. CF(1) is attached to CF(0) by a central stalk formed by the gamma and epsilon chains, while a peripheral stalk is formed by the delta and b chains.

It localises to the cell membrane. The enzyme catalyses ATP + H2O + 4 H(+)(in) = ADP + phosphate + 5 H(+)(out). In terms of biological role, produces ATP from ADP in the presence of a proton gradient across the membrane. The alpha chain is a regulatory subunit. This Clostridium botulinum (strain ATCC 19397 / Type A) protein is ATP synthase subunit alpha.